The chain runs to 352 residues: Probable dual-specificity RNA methyltransferase RlmN (352 aa).

Residue Glu-99 is the Proton acceptor of the active site. A Radical SAM core domain is found at 105-325 (EGDRATLCIS…ESHGYTCTIR (221 aa)). Residues Cys-112 and Cys-336 are joined by a disulfide bond. Residues Cys-119, Cys-123, and Cys-126 each contribute to the [4Fe-4S] cluster site. Residues 164 to 165 (GE), Ser-196, 217 to 219 (SLH), and His-293 contribute to the S-adenosyl-L-methionine site. Cys-336 functions as the S-methylcysteine intermediate in the catalytic mechanism.

This sequence belongs to the radical SAM superfamily. RlmN family. The cofactor is [4Fe-4S] cluster.

Its subcellular location is the cytoplasm. It carries out the reaction adenosine(2503) in 23S rRNA + 2 reduced [2Fe-2S]-[ferredoxin] + 2 S-adenosyl-L-methionine = 2-methyladenosine(2503) in 23S rRNA + 5'-deoxyadenosine + L-methionine + 2 oxidized [2Fe-2S]-[ferredoxin] + S-adenosyl-L-homocysteine. The enzyme catalyses adenosine(37) in tRNA + 2 reduced [2Fe-2S]-[ferredoxin] + 2 S-adenosyl-L-methionine = 2-methyladenosine(37) in tRNA + 5'-deoxyadenosine + L-methionine + 2 oxidized [2Fe-2S]-[ferredoxin] + S-adenosyl-L-homocysteine. Functionally, specifically methylates position 2 of adenine 2503 in 23S rRNA and position 2 of adenine 37 in tRNAs. This chain is Probable dual-specificity RNA methyltransferase RlmN, found in Porphyromonas gingivalis (strain ATCC 33277 / DSM 20709 / CIP 103683 / JCM 12257 / NCTC 11834 / 2561).